Here is a 451-residue protein sequence, read N- to C-terminus: Eukaryotic translation initiation factor 3 subunit E (451 aa).

Residues 245-425 (PFFNHEPARD…GTVVMNHPPS (181 aa)) form the PCI domain.

The protein belongs to the eIF-3 subunit E family. As to quaternary structure, component of the eukaryotic translation initiation factor 3 (eIF-3) complex.

Its subcellular location is the cytoplasm. In terms of biological role, component of the eukaryotic translation initiation factor 3 (eIF-3) complex, which is involved in protein synthesis of a specialized repertoire of mRNAs and, together with other initiation factors, stimulates binding of mRNA and methionyl-tRNAi to the 40S ribosome. The eIF-3 complex specifically targets and initiates translation of a subset of mRNAs involved in cell proliferation. The chain is Eukaryotic translation initiation factor 3 subunit E (int6) from Sclerotinia sclerotiorum (strain ATCC 18683 / 1980 / Ss-1) (White mold).